We begin with the raw amino-acid sequence, 258 residues long: GTP cyclohydrolase FolE2 (258 aa).

Belongs to the GTP cyclohydrolase IV family.

It carries out the reaction GTP + H2O = 7,8-dihydroneopterin 3'-triphosphate + formate + H(+). It participates in cofactor biosynthesis; 7,8-dihydroneopterin triphosphate biosynthesis; 7,8-dihydroneopterin triphosphate from GTP: step 1/1. Converts GTP to 7,8-dihydroneopterin triphosphate. The polypeptide is GTP cyclohydrolase FolE2 (Geobacter sulfurreducens (strain ATCC 51573 / DSM 12127 / PCA)).